The primary structure comprises 812 residues: Eukaryotic translation initiation factor 3 subunit C (812 aa).

Positions 1-105 are disordered; the sequence is MSRFFSRGYH…SDESDDEGKK (105 aa). Composition is skewed to acidic residues over residues 17–40 and 48–59; these read SEDEELLTSSEEELMSSSEEEVVS and SESESAESDDDS. The region spanning 607-783 is the PCI domain; it reads FHQHINLDLI…EMLIFDKGDE (177 aa).

It belongs to the eIF-3 subunit C family. Component of the eukaryotic translation initiation factor 3 (eIF-3) complex.

Its subcellular location is the cytoplasm. Its function is as follows. Component of the eukaryotic translation initiation factor 3 (eIF-3) complex, which is involved in protein synthesis of a specialized repertoire of mRNAs and, together with other initiation factors, stimulates binding of mRNA and methionyl-tRNAi to the 40S ribosome. The eIF-3 complex specifically targets and initiates translation of a subset of mRNAs involved in cell proliferation. In Eremothecium gossypii (strain ATCC 10895 / CBS 109.51 / FGSC 9923 / NRRL Y-1056) (Yeast), this protein is Eukaryotic translation initiation factor 3 subunit C.